We begin with the raw amino-acid sequence, 76 residues long: Cytochrome c oxidase subunit 6C-1 (76 aa).

At 4-14 the chain is on the mitochondrial matrix side; the sequence is GALLPKPQMHD. A helical membrane pass occupies residues 15–55; sequence PLSKRLWVHIVGAFIVDLGVAAAHKFGAAKPRKKAYADFYR. The Mitochondrial intermembrane portion of the chain corresponds to 56–76; it reads NHDPMKDFDEMRKAGVFRSVK.

Belongs to the cytochrome c oxidase subunit 6c family. In terms of assembly, component of the cytochrome c oxidase (complex IV, CIV), a multisubunit enzyme composed of 14 subunits. The complex is composed of a catalytic core of 3 subunits MT-CO1, MT-CO2 and MT-CO3, encoded in the mitochondrial DNA, and 11 supernumerary subunits COX4I, COX5A, COX5B, COX6A, COX6B, COX6C, COX7A, COX7B, COX7C, COX8 and NDUFA4, which are encoded in the nuclear genome. The complex exists as a monomer or a dimer and forms supercomplexes (SCs) in the inner mitochondrial membrane with NADH-ubiquinone oxidoreductase (complex I, CI) and ubiquinol-cytochrome c oxidoreductase (cytochrome b-c1 complex, complex III, CIII), resulting in different assemblies (supercomplex SCI(1)III(2)IV(1) and megacomplex MCI(2)III(2)IV(2)).

It is found in the mitochondrion inner membrane. The protein operates within energy metabolism; oxidative phosphorylation. In terms of biological role, component of the cytochrome c oxidase, the last enzyme in the mitochondrial electron transport chain which drives oxidative phosphorylation. The respiratory chain contains 3 multisubunit complexes succinate dehydrogenase (complex II, CII), ubiquinol-cytochrome c oxidoreductase (cytochrome b-c1 complex, complex III, CIII) and cytochrome c oxidase (complex IV, CIV), that cooperate to transfer electrons derived from NADH and succinate to molecular oxygen, creating an electrochemical gradient over the inner membrane that drives transmembrane transport and the ATP synthase. Cytochrome c oxidase is the component of the respiratory chain that catalyzes the reduction of oxygen to water. Electrons originating from reduced cytochrome c in the intermembrane space (IMS) are transferred via the dinuclear copper A center (CU(A)) of subunit 2 and heme A of subunit 1 to the active site in subunit 1, a binuclear center (BNC) formed by heme A3 and copper B (CU(B)). The BNC reduces molecular oxygen to 2 water molecules using 4 electrons from cytochrome c in the IMS and 4 protons from the mitochondrial matrix. The sequence is that of Cytochrome c oxidase subunit 6C-1 (Cox6c1) from Rattus norvegicus (Rat).